The primary structure comprises 561 residues: MNINVAELLNGNYILLLFVVLALGLCLGKLRLGSIQLGNSIGVLVVSLLLGQQHFSINTDALNLGFMLFIFCVGVEAGPNFFSIFFRDGKNYLMLALVMVGSALVIALGLGKLFGWDIGLTAGMLAGSMTSTPVLVGAGDTLHHSGMESRQLSLALDNLSLGYALTYLIGLVSLIVGARYLPKLQHQDLQTSAQQIARERGLDTDANRKVYLPVIRAYRVGPELVAWTDGKNLRELGIYRQTGCYIERIRRNGILANPDGDAVLQMGDEIALVGYPDAHARLDPSFRNGKEVFDRDLLDMRIVTEEVVVKNHNAVGKRLAQLKLTDHGCFLNRVIRSQIEMPIDDNVVLNKGDVLQVSGDARRVKTIADRIGFISIHSQVTDLLAFCAFFVIGLMIGMITFQFSTFSFGMGNAAGLLFAGIMLGFMRANHPTFGYIPQGALSMVKEFGLMVFMAGVGLSAGSGINNGLGAIGGQMLIAGLIVSLVPVVICFLFGAYVLRMNRALLFGAMMGARTCAPAMEIISDTARSNIPALGYAGTYAIANVLLTLAGTIIVMVWPGLG.

The next 5 helical transmembrane spans lie at 8–28, 32–52, 66–86, 94–114, and 158–178; these read LLNG…LCLG, LGSI…LLGQ, FMLF…SIFF, MLAL…GKLF, and NLSL…IVGA. RCK C-terminal domains follow at residues 200–288 and 292–373; these read RGLD…SFRN and VFDR…RIGF. 5 helical membrane passes run 383–403, 406–426, 451–471, 475–495, and 540–560; these read LLAF…TFQF, FSFG…LGFM, VFMA…LGAI, MLIA…LFGA, and AIAN…WPGL.

The protein belongs to the AAE transporter (TC 2.A.81) family. YbjL subfamily.

The protein resides in the cell membrane. This is Putative transport protein YbjL from Shigella flexneri.